We begin with the raw amino-acid sequence, 131 residues long: Small ribosomal subunit protein uS8 (131 aa).

The protein belongs to the universal ribosomal protein uS8 family. Part of the 30S ribosomal subunit. Contacts proteins S5 and S12.

Its function is as follows. One of the primary rRNA binding proteins, it binds directly to 16S rRNA central domain where it helps coordinate assembly of the platform of the 30S subunit. This is Small ribosomal subunit protein uS8 from Acinetobacter baylyi (strain ATCC 33305 / BD413 / ADP1).